Reading from the N-terminus, the 582-residue chain is tRNA-guanine(15) transglycosylase (582 aa).

The Nucleophile role is filled by Asp95. Asp130 and Gly196 together coordinate substrate. Zn(2+)-binding residues include Cys279, Cys281, and Cys284. The PUA domain occupies 507–582 (RMRVVVNKEA…RAVKVRKGVE (76 aa)).

The protein belongs to the archaeosine tRNA-ribosyltransferase family. Homodimer. It depends on Zn(2+) as a cofactor.

It carries out the reaction guanosine(15) in tRNA + 7-cyano-7-deazaguanine = 7-cyano-7-carbaguanosine(15) in tRNA + guanine. It participates in tRNA modification; archaeosine-tRNA biosynthesis. Its function is as follows. Exchanges the guanine residue with 7-cyano-7-deazaguanine (preQ0) at position 15 in the dihydrouridine loop (D-loop) of archaeal tRNAs. The protein is tRNA-guanine(15) transglycosylase (tgtA) of Pyrococcus horikoshii (strain ATCC 700860 / DSM 12428 / JCM 9974 / NBRC 100139 / OT-3).